Reading from the N-terminus, the 615-residue chain is uncharacterized protein (615 aa).

Composition is skewed to polar residues over residues 1-11 (MSETSSNSPAS), 41-55 (LSQN…SSKV), and 128-140 (TSGS…NAPP). 2 disordered regions span residues 1–61 (MSET…QALV) and 97–149 (HQNH…KASS). Phosphoserine is present on residues Ser149 and Ser152. The disordered stretch occupies residues 181 to 217 (LIHPEQTDRGLPYAPDEKFHNSGSLKLPKGASLEDLS). Ser219 and Ser275 each carry phosphoserine. Disordered stretches follow at residues 266-481 (KPLA…KFTG), 493-565 (RLQK…KPSF), and 586-615 (GVET…TEEQ). Over residues 272–283 (RQRSTADLTESD) the composition is skewed to polar residues. Phosphothreonine is present on residues Thr276 and Thr297. The segment covering 312-323 (EAEKGFYTKDGE) has biased composition (basic and acidic residues). Positions 356–376 (PSLSSASQPSAASSSSSSEPS) are enriched in low complexity. A compositionally biased stretch (polar residues) spans 505-522 (PNKSKSPSGTKSPASGET). Thr514 carries the post-translational modification Phosphothreonine. Ser516 carries the post-translational modification Phosphoserine. Residues 586-599 (GVETRKEVEPKEEA) are compositionally biased toward basic and acidic residues. Residues 600 to 615 (VIPEEDVEVEVETEEQ) show a composition bias toward acidic residues.

This is an uncharacterized protein from Schizosaccharomyces pombe (strain 972 / ATCC 24843) (Fission yeast).